The sequence spans 232 residues: Ion-translocating oxidoreductase complex subunit E (232 aa).

6 helical membrane-spanning segments follow: residues 18–38 (ALVQ…VTNG), 39–59 (LGLG…VSII), 69–89 (IPIF…LMNA), 93–113 (ELYQ…AIIG), 128–148 (AFDG…LGAM), and 182–202 (PFLL…LIAA).

The protein belongs to the NqrDE/RnfAE family. As to quaternary structure, the complex is composed of six subunits: RnfA, RnfB, RnfC, RnfD, RnfE and RnfG.

Its subcellular location is the cell inner membrane. Its function is as follows. Part of a membrane-bound complex that couples electron transfer with translocation of ions across the membrane. In Pseudoalteromonas atlantica (strain T6c / ATCC BAA-1087), this protein is Ion-translocating oxidoreductase complex subunit E.